A 236-amino-acid chain; its full sequence is C-&gt;U-editing enzyme APOBEC-1 (236 aa).

A CMP/dCMP-type deaminase domain is found at 10–134 (GDPTLRRRIE…QQNRQGLRDL (125 aa)). Zn(2+) is bound at residue His61. Catalysis depends on Glu63, which acts as the Proton donor. Residues Cys93 and Cys96 each contribute to the Zn(2+) site.

Belongs to the cytidine and deoxycytidylate deaminase family. As to quaternary structure, homodimer. Interacts with A1CF; form an mRNA editing complex. Interacts with RBM47; form an mRNA editing complex. Found in a complex with CELF2/CUGBP2 and A1CF. Interacts with HNRPAB. Interacts with SYNCRIP. Zn(2+) is required as a cofactor. As to expression, expressed exclusively in the small intestine.

The protein resides in the cytoplasm. It localises to the nucleus. It catalyses the reaction a cytidine in mRNA + H2O + H(+) = a uridine in mRNA + NH4(+). The enzyme catalyses cytidine(6666) in apoB mRNA + H2O + H(+) = uridine(6666) in apoB mRNA + NH4(+). Its function is as follows. Cytidine deaminase catalyzing the cytidine to uridine postranscriptional editing of a variety of mRNAs. Form complexes with cofactors that confer differential editing activity and selectivity. Responsible for the postranscriptional editing of a CAA codon for Gln to a UAA codon for stop in the apolipoprotein B mRNA. Also involved in CGA (Arg) to UGA (Stop) editing in the NF1 mRNA. May also play a role in the epigenetic regulation of gene expression by participating in DNA demethylation. In Homo sapiens (Human), this protein is C-&gt;U-editing enzyme APOBEC-1.